A 735-amino-acid polypeptide reads, in one-letter code: Wall-associated receptor kinase 1 (735 aa).

The signal sequence occupies residues 1–24; the sequence is MKVQEGLFLVAIFFSLACTQLVKG. At 25-331 the chain is on the extracellular side; sequence QHQPGENCQN…TTTMSCKRKE (307 aa). N-linked (GlcNAc...) asparagine glycosylation is found at asparagine 38, asparagine 56, asparagine 80, asparagine 90, asparagine 113, asparagine 140, asparagine 209, asparagine 235, and asparagine 250. Positions 67–254 are polygalacturonic acid-binding; the sequence is RPHVLSDIEV…SICGGNSTCL (188 aa). One can recognise an EGF-like 1 domain in the interval 234 to 281; that stretch reads GNQTCEQVGSTSICGGNSTCLDSTPRNGYICRCNEGFDGNPYLSAGCQ. Cystine bridges form between cysteine 238/cysteine 253, cysteine 247/cysteine 264, cysteine 266/cysteine 280, cysteine 286/cysteine 303, cysteine 297/cysteine 312, and cysteine 314/cysteine 327. The region spanning 282-328 is the EGF-like 2; calcium-binding domain; sequence DVNECTTSSTIHRHNCSDPKTCRNKVGGFYCKCQSGYRLDTTTMSCK. Residue asparagine 296 is glycosylated (N-linked (GlcNAc...) asparagine). Residues 332–352 form a helical membrane-spanning segment; it reads FAWTTILLVTTIGFLVILLGV. At 353–735 the chain is on the cytoplasmic side; the sequence is ACIQQRMKHL…VAILDIETGR (383 aa). A Phosphothreonine modification is found at threonine 398. In terms of domain architecture, Protein kinase spans 409-692; that stretch reads YAESRILGQG…RVEKTKHKWS (284 aa). Residues 415 to 423 and lysine 437 contribute to the ATP site; that span reads LGQGGQGTV. Phosphotyrosine is present on tyrosine 482. The active-site Proton acceptor is the aspartate 534. Phosphothreonine occurs at positions 568 and 573. Tyrosine 581 carries the phosphotyrosine modification.

It belongs to the protein kinase superfamily. Ser/Thr protein kinase family. As to quaternary structure, interacts with the glycine-rich proteins GRP3 and GRP3S, and the type 2C protein phosphatase KAPP. Component of a 500 kDa complex, composed of WAK1, GRP3 and KAPP. Interacts with the oxygen-evolving enhancer protein 2 (OEE2). Predominantly expressed in green tissues such as stems and leaves. Detected at organ junctions.

The protein resides in the membrane. The enzyme catalyses L-seryl-[protein] + ATP = O-phospho-L-seryl-[protein] + ADP + H(+). It carries out the reaction L-threonyl-[protein] + ATP = O-phospho-L-threonyl-[protein] + ADP + H(+). Functionally, serine/threonine-protein kinase that may function as a signaling receptor of extracellular matrix component. Binding to pectin may have significance in the control of cell expansion, morphogenesis and development. Required during plant's response to pathogen infection and in plant defense against heavy metal toxicity. Phosphorylates the oxygen-evolving enhancer protein 2 (OEE2) in an GRP-3-dependent manner. The protein is Wall-associated receptor kinase 1 (WAK1) of Arabidopsis thaliana (Mouse-ear cress).